The primary structure comprises 198 residues: Photosystem I assembly protein Ycf4 (198 aa).

A disordered region spans residues 1-20 (MTASTTINKGDSPNGDSSAS). The next 2 helical transmembrane spans lie at 38–58 (WASI…SSYL) and 78–98 (LVMG…WLAI).

Belongs to the Ycf4 family.

Its subcellular location is the cellular thylakoid membrane. Seems to be required for the assembly of the photosystem I complex. This Trichormus variabilis (strain ATCC 29413 / PCC 7937) (Anabaena variabilis) protein is Photosystem I assembly protein Ycf4.